A 149-amino-acid chain; its full sequence is Epoxide hydrolase EphG (149 aa).

The Proton donor role is filled by aspartate 93. Aspartate 122 acts as the Proton acceptor in catalysis.

The protein belongs to the limonene-1,2-epoxide hydrolase family. Homodimer. Is also present as monomer in solution.

It carries out the reaction an epoxide + H2O = an ethanediol. The enzyme catalyses 5,6alpha-epoxy-5alpha-cholestan-3beta-ol + H2O = 5alpha-cholestane-3beta,5,6beta-triol. It catalyses the reaction 5,6beta-epoxy-5beta-cholestan-3beta-ol + H2O = 5alpha-cholestane-3beta,5,6beta-triol. With respect to regulation, is inhibited by the anti-epileptic drug valpromide (Ki value of about 100 uM). Epoxide hydrolase capable of hydrolyzing long or bulky lipophilic epoxides such as 9,10-epoxystearic acid and cholesterol 5,6-oxide in vitro. The physiological substrates have yet to be identified, but could be fatty acid or steroid derivatives. This chain is Epoxide hydrolase EphG (ephG), found in Mycobacterium tuberculosis (strain ATCC 25618 / H37Rv).